The chain runs to 141 residues: Large ribosomal subunit protein uL11 (141 aa).

The protein belongs to the universal ribosomal protein uL11 family. As to quaternary structure, part of the ribosomal stalk of the 50S ribosomal subunit. Interacts with L10 and the large rRNA to form the base of the stalk. L10 forms an elongated spine to which L12 dimers bind in a sequential fashion forming a multimeric L10(L12)X complex.

Forms part of the ribosomal stalk which helps the ribosome interact with GTP-bound translation factors. The sequence is that of Large ribosomal subunit protein uL11 from Acidianus ambivalens (Desulfurolobus ambivalens).